The sequence spans 856 residues: MSNSQLQPESLAEYLAHLPMSDQQRAELAGCQSFSELHQRLSSSTFDGPTDAAQASVGQRLTLSTAAELEEAEMLAVDAEGRVCLKATPPIRRTKVVPEPWRTNILVRGWRRLTGRTNPPAPKKDERVLPAARWRTVGSIRRYILLVLMLGQTIVAGWYMKGIMPYQGWSFVDLEEVMHQPLMQTAQQVLPYALQTSILILFGILFCWVSAGFWTALMGFLELLTGHDKYRISGASAGNEPIPKDARTALVMPICNEDVPRVFAGLRATFESVAATGDLDRFDFFVLSDSNDSDICVAEQQAWLDVCREAKGFGKIFYRRRRRRVKRKSGNLDDFCRRWGGDYKYMVVLDADSVMSGECLTSLVRLMEATPDAGIIQTAPRASGMDTLYARMQQFATRVYGPLFTAGLHFWQLGESHYWGHNAIIRMQPFIEHCALAPLPGKGAFAGAILSHDFVEAALMRRAGWGVWIAYDLPGSYEELPPNLLDELKRDRRWCHGNLMNFRLFLVKGMHPVHRAVFLTGVMSYLSAPLWFFFLVLSTALLAVNTLMEPQYFLEPRQLYPLWPQWHPDKAIALFSTTIVLLFLPKLLSIILIWAKGAKEFGGKFKVTLSMLLEMLFSMLLAPVRMIFHTRFVLAAFLGWAATWNSPQRDDDSTPWSEAVKRHGPQTLLGFCWALLVIWLNPSFLWWLVPIVGSLMLSIPVSVISSRVGLGLKSRDESLFLIPEEYAPPQALLATDQYTHENRWHALNDGFVRAVVDPQQNALACALATSRHTQAEPIEWLRQERVRHALKVGPAALNNSERLALLSDPVALGRLHEQVWSEGHSEWLSAWRQSVDADPHAPLLPLQPLNAAPQPA.

The next 6 helical transmembrane spans lie at 144-164 (ILLV…KGIM), 198-218 (ILIL…TALM), 517-537 (VFLT…FLVL), 574-594 (LFST…ILIW), 608-628 (TLSM…RMIF), and 684-704 (FLWW…VSVI).

The protein belongs to the glycosyltransferase 2 family. OpgH subfamily.

It is found in the cell inner membrane. Its pathway is glycan metabolism; osmoregulated periplasmic glucan (OPG) biosynthesis. In terms of biological role, involved in the biosynthesis of osmoregulated periplasmic glucans (OPGs). The sequence is that of Glucans biosynthesis glucosyltransferase H from Pseudomonas fluorescens (strain ATCC BAA-477 / NRRL B-23932 / Pf-5).